The following is a 1522-amino-acid chain: DNA topoisomerase 2-binding protein 1 (1522 aa).

2 BRCT domains span residues 101–189 (VYNM…RYTD) and 195–284 (FKCP…IYKT). Thr298 carries the post-translational modification Phosphothreonine. Ser301 is modified (phosphoserine). BRCT domains lie at 354-444 (APED…PYIH), 548-633 (TEEG…SNPL), and 641-738 (TGMT…HFLI). Residues 756 to 891 (INLNSDTAEH…AVALSASPQL (136 aa)) form an interaction with CIP2A region. Residues Thr779 and Thr848 each carry the phosphothreonine modification. The Nuclear localization signal motif lies at 852-858 (PSQQKRK). Ser860 bears the Phosphoserine mark. At Thr861 the chain carries Phosphothreonine. 3 positions are modified to phosphoserine: Ser864, Ser886, and Ser888. A BRCT 6 domain is found at 900 to 991 (EAPKPLHKVV…KHLPESLYPH (92 aa)). Position 1002 is a phosphoserine (Ser1002). The interval 1018–1058 (VSSTKDDEPDPLILEENDVDNMATNNKESAPSNGSGKNDSK) is disordered. The segment covering 1024–1036 (DEPDPLILEENDV) has biased composition (acidic residues). The span at 1039-1058 (MATNNKESAPSNGSGKNDSK) shows a compositional bias: polar residues. A phosphothreonine mark is found at Thr1062 and Thr1064. Polar residues predominate over residues 1083–1114 (SIVKPQGQRTSLSRSGCNSASSTPDSTRSARS). Residues 1083–1118 (SIVKPQGQRTSLSRSGCNSASSTPDSTRSARSGRSR) are disordered. BRCT domains follow at residues 1259–1351 (ETHE…DYEW) and 1389–1486 (IVEG…NYCL). Residues 1501–1522 (TGLSQKRKAPTEKNKIKRPRVH) form a disordered region. Phosphoserine is present on Ser1504. The short motif at 1517 to 1520 (KRPR) is the Nuclear localization signal element.

It belongs to the TOPBP1 family. Interacts (via BRCT domains 1 and 2) with (phosphorylated) MDC1; promoting TOPBP1 recruitment to DNA damage sites during mitosis. Interacts (via BRCT domains 7 and 8) with (autophosphorylated) ATR; promoting activation of ATR. Interacts (via BRCT domains 7 and 8) with (phosphorylated) POLQ; specifically binds POLQ phosphorylated by PLK1, promoting POLQ recruitment to DNA damage sites. Interacts (via BRCT domains 1 and 2) with (phosphorylated) RAD9A. Interacts (via BRCT domain 2) with (phosphorylated) TP53BP1. Interacts (via BRCT domain 2) with (phosphorylated) HTATSF1. Interacts (via BRCT domains 7 and 8) with (phosphorylated) RAD51; promoting RAD51 recruitment to damaged chromatin. Interacts with CIP2A; forming the CIP2A-TOPBP1 complex. Interacts with POLE. Interacts with UBR5. Interacts with E2F1. Interacts with PML. Interacts with SMARCA2. Interacts with SMARCA4. Interacts with RHNO1. May interact with TOP2B. Interacts with TICRR. Interacts with HELB. Interacts (via residues 1233-1522) with RECQL4. Post-translationally, phosphorylated on serine and threonine residues in response to X-ray irradiation. In terms of processing, ubiquitinated and degraded by the proteasome. X-ray irradiation reduces ubiquitination. Deubiquitinated by USP13; leading to TOPBP1 stabilizion and activation of the ATR-TOPBP1 axis pathway. Highly expressed in heart, brain, placenta, lung and kidney.

It localises to the nucleus. It is found in the chromosome. The protein resides in the cytoplasm. The protein localises to the cytoskeleton. Its subcellular location is the microtubule organizing center. It localises to the centrosome. It is found in the spindle pole. Its function is as follows. Scaffold protein that acts as a key protein-protein adapter in DNA replication and DNA repair. Composed of multiple BRCT domains, which specifically recognize and bind phosphorylated proteins, bringing proteins together into functional combinations. Required for DNA replication initiation but not for the formation of pre-replicative complexes or the elongation stages. Necessary for the loading of replication factors onto chromatin, including GMNC, CDC45, DNA polymerases and components of the GINS complex. Plays a central role in DNA repair by bridging proteins and promoting recruitment of proteins to DNA damage sites. Involved in double-strand break (DSB) repair via homologous recombination in S-phase by promoting the exchange between the DNA replication factor A (RPA) complex and RAD51. Mechanistically, TOPBP1 is recruited to DNA damage sites in S-phase via interaction with phosphorylated HTATSF1, and promotes the loading of RAD51, thereby facilitating RAD51 nucleofilaments formation and RPA displacement, followed by homologous recombination. Involved in microhomology-mediated end-joining (MMEJ) DNA repair by promoting recruitment of polymerase theta (POLQ) to DNA damage sites during mitosis. MMEJ is an alternative non-homologous end-joining (NHEJ) machinery that takes place during mitosis to repair DSBs in DNA that originate in S-phase. Recognizes and binds POLQ phosphorylated by PLK1, enabling its recruitment to DSBs for subsequent repair. Involved in G1 DNA damage checkpoint by acting as a molecular adapter that couples TP53BP1 and the 9-1-1 complex. In response to DNA damage, triggers the recruitment of checkpoint signaling proteins on chromatin, which activate the CHEK1 signaling pathway and block S-phase progression. Acts as an activator of the kinase activity of ATR. Also required for chromosomal stability when DSBs occur during mitosis by forming filamentous assemblies that bridge MDC1 and tether broken chromosomes during mitosis. Together with CIP2A, plays an essential role in the response to genome instability generated by the presence of acentric chromosome fragments derived from shattered chromosomes within micronuclei. Micronuclei, which are frequently found in cancer cells, consist of chromatin surrounded by their own nuclear membrane: following breakdown of the micronuclear envelope, a process associated with chromothripsis, the CIP2A-TOPBP1 complex tethers chromosome fragments during mitosis to ensure clustered segregation of the fragments to a single daughter cell nucleus, facilitating re-ligation with limited chromosome scattering and loss. Recruits the SWI/SNF chromatin remodeling complex to E2F1-responsive promoters, thereby down-regulating E2F1 activity and inhibiting E2F1-dependent apoptosis during G1/S transition and after DNA damage. This is DNA topoisomerase 2-binding protein 1 from Homo sapiens (Human).